Consider the following 629-residue polypeptide: Phosphoglucomutase, chloroplastic (629 aa).

The transit peptide at 1–69 directs the protein to the chloroplast; sequence MSSTYARFDT…SSSSGPIIAG (69 aa). 2 residues coordinate alpha-D-glucose 1,6-bisphosphate: arginine 94 and serine 187. Serine 187 (phosphoserine intermediate) is an active-site residue. 4 residues coordinate Mg(2+): serine 187, aspartate 352, aspartate 354, and aspartate 356. Residue serine 187 is modified to Phosphoserine. Positions 356, 357, 420, 439, 441, and 452 each coordinate alpha-D-glucose 1,6-bisphosphate.

The protein belongs to the phosphohexose mutase family. As to quaternary structure, monomer. Mg(2+) serves as cofactor.

It localises to the plastid. The protein localises to the chloroplast. It carries out the reaction alpha-D-glucose 1-phosphate = alpha-D-glucose 6-phosphate. The catalysed reaction is O-phospho-L-seryl-[protein] + alpha-D-glucose 1-phosphate = alpha-D-glucose 1,6-bisphosphate + L-seryl-[protein]. The enzyme catalyses alpha-D-glucose 1,6-bisphosphate + L-seryl-[protein] = O-phospho-L-seryl-[protein] + alpha-D-glucose 6-phosphate. Its activity is regulated as follows. Inhibited by the Calvin cycle intermediates fructose-1,6-bisphosphate and ribulose-1,5-bisphosphate. Catalyzes the reversible isomerization of alpha-D-glucose 1-phosphate to alpha-D-glucose 6-phosphate. The mechanism proceeds via the intermediate compound alpha-D-glucose 1,6-bisphosphate. This enzyme participates in both the breakdown and synthesis of glucose. In Brassica napus (Rape), this protein is Phosphoglucomutase, chloroplastic (PGMP).